The following is a 171-amino-acid chain: Inosine/xanthosine triphosphatase (171 aa).

Residue 8–13 (TTNPAK) participates in substrate binding. Glu-38 contributes to the Mg(2+) binding site.

It belongs to the YjjX NTPase family. In terms of assembly, homodimer. The cofactor is Mg(2+). Mn(2+) is required as a cofactor.

It carries out the reaction XTP + H2O = XDP + phosphate + H(+). The catalysed reaction is ITP + H2O = IDP + phosphate + H(+). Functionally, phosphatase that hydrolyzes non-canonical purine nucleotides such as XTP and ITP to their respective diphosphate derivatives. Probably excludes non-canonical purines from DNA/RNA precursor pool, thus preventing their incorporation into DNA/RNA and avoiding chromosomal lesions. The polypeptide is Inosine/xanthosine triphosphatase (Klebsiella pneumoniae (strain 342)).